The primary structure comprises 368 residues: tRNA 2-selenouridine synthase (368 aa).

The Rhodanese domain maps to 15–138 (FLNQHPIMDV…LRQYLIGVIE (124 aa)). Cys98 functions as the S-selanylcysteine intermediate in the catalytic mechanism.

The protein belongs to the SelU family. Monomer.

It carries out the reaction 5-methylaminomethyl-2-thiouridine(34) in tRNA + selenophosphate + (2E)-geranyl diphosphate + H2O + H(+) = 5-methylaminomethyl-2-selenouridine(34) in tRNA + (2E)-thiogeraniol + phosphate + diphosphate. The enzyme catalyses 5-methylaminomethyl-2-thiouridine(34) in tRNA + (2E)-geranyl diphosphate = 5-methylaminomethyl-S-(2E)-geranyl-thiouridine(34) in tRNA + diphosphate. The catalysed reaction is 5-methylaminomethyl-S-(2E)-geranyl-thiouridine(34) in tRNA + selenophosphate + H(+) = 5-methylaminomethyl-2-(Se-phospho)selenouridine(34) in tRNA + (2E)-thiogeraniol. It catalyses the reaction 5-methylaminomethyl-2-(Se-phospho)selenouridine(34) in tRNA + H2O = 5-methylaminomethyl-2-selenouridine(34) in tRNA + phosphate. Involved in the post-transcriptional modification of the uridine at the wobble position (U34) of tRNA(Lys), tRNA(Glu) and tRNA(Gln). Catalyzes the conversion of 2-thiouridine (S2U-RNA) to 2-selenouridine (Se2U-RNA). Acts in a two-step process involving geranylation of 2-thiouridine (S2U) to S-geranyl-2-thiouridine (geS2U) and subsequent selenation of the latter derivative to 2-selenouridine (Se2U) in the tRNA chain. The polypeptide is tRNA 2-selenouridine synthase (Shewanella baltica (strain OS223)).